A 366-amino-acid chain; its full sequence is tRNA-specific 2-thiouridylase MnmA (366 aa).

ATP-binding positions include 6 to 13 and Leu-32; that span reads AMSGGVDS. The active-site Nucleophile is the Cys-101. Residues Cys-101 and Cys-197 are joined by a disulfide bond. ATP is bound at residue Gly-125. Residues 147–149 form an interaction with tRNA region; sequence KDQ. The Cysteine persulfide intermediate role is filled by Cys-197.

It belongs to the MnmA/TRMU family.

It localises to the cytoplasm. The enzyme catalyses S-sulfanyl-L-cysteinyl-[protein] + uridine(34) in tRNA + AH2 + ATP = 2-thiouridine(34) in tRNA + L-cysteinyl-[protein] + A + AMP + diphosphate + H(+). Functionally, catalyzes the 2-thiolation of uridine at the wobble position (U34) of tRNA, leading to the formation of s(2)U34. The polypeptide is tRNA-specific 2-thiouridylase MnmA (Cutibacterium acnes (strain DSM 16379 / KPA171202) (Propionibacterium acnes)).